The following is a 309-amino-acid chain: Glutaminase (309 aa).

Positions 64, 114, 160, 167, 191, 243, and 261 each coordinate substrate.

The protein belongs to the glutaminase family. Homotetramer.

The catalysed reaction is L-glutamine + H2O = L-glutamate + NH4(+). This chain is Glutaminase, found in Methylobacterium nodulans (strain LMG 21967 / CNCM I-2342 / ORS 2060).